The sequence spans 231 residues: Quercetin 2,3-dioxygenase (231 aa).

Residues His-57, His-59, His-101, and Glu-103 each contribute to the a divalent metal cation site.

This sequence belongs to the pirin family. Zn(2+) is required as a cofactor. It depends on Co(2+) as a cofactor. Requires Fe(2+) as cofactor.

The catalysed reaction is quercetin + O2 = 2-(3,4-dihydroxybenzoyloxy)-4,6-dihydroxybenzoate + CO. It functions in the pathway flavonoid metabolism; quercetin degradation. Inhibited by kojic acid, sodium diethyldithiocarbamate and 1,10-phenanthroline monohydrochloride. Has quercetin 2,3-dioxygenase activity in vitro. Its physiological role is unknown; however, may provide a mechanism that would avoid inhibition of key cellular proteins, such as DNA gyrase, by quercetin. This Escherichia coli (strain K12) protein is Quercetin 2,3-dioxygenase (yhhW).